The following is a 542-amino-acid chain: Probable quinate permease (542 aa).

Residues 1 to 22 are Cytoplasmic-facing; that stretch reads MSILALVEDRPTPKEVYNWRIY. Residues 23–43 traverse the membrane as a helical segment; it reads LLAAVASFTSCMIGYDSAFIG. Residues 44-66 are Extracellular-facing; that stretch reads TTLALSSFREEFGFNTMSKTAVN. A helical transmembrane segment spans residues 67–87; the sequence is LVSANIVSCYQAGAFFGAFLA. Residues 88 to 97 are Cytoplasmic-facing; the sequence is YPVGHFWGRK. The chain crosses the membrane as a helical span at residues 98 to 118; the sequence is WGLLFSGAIFTLGAGLMLGAD. The Extracellular portion of the chain corresponds to 119–130; sequence GDRGLGLLYGGR. The chain crosses the membrane as a helical span at residues 131-151; sequence VLAGLGVGAGSNITPIYISEM. The Cytoplasmic segment spans residues 152–159; it reads APPSIRGR. A helical membrane pass occupies residues 160–180; the sequence is LVGVYELGWQIGGLVGFWINY. Over 181–193 the chain is Extracellular; that stretch reads GVSETLAPSHKQW. The helical transmembrane segment at 194–214 threads the bilayer; sequence IIPFAVQLIPSGLLLIGAVFL. Topologically, residues 215-285 are cytoplasmic; the sequence is KESPRWLFSR…AGTNKKVMYR (71 aa). The helical transmembrane segment at 286 to 306 threads the bilayer; that stretch reads LFLGSMLFFWQNGSGINAINY. Topologically, residues 307–325 are extracellular; sequence YSPTVFKSIGLQGANTSMF. The chain crosses the membrane as a helical span at residues 326 to 346; that stretch reads STGIFGVVKTVVTFVWLLYLI. Residues 347-352 lie on the Cytoplasmic side of the membrane; the sequence is DRLGRR. The chain crosses the membrane as a helical span at residues 353–373; it reads LLLLIGAAGASVCLFIVGAYI. At 374–387 the chain is on the extracellular side; that stretch reads KIADPASNPTQEMT. The helical transmembrane segment at 388–408 threads the bilayer; sequence GGGIAAMFFFYLYTVFYTPSW. Topologically, residues 409–456 are cytoplasmic; that stretch reads NGTPWVMNSEMFEPNMRSLAQACAAASNWFWNFLISRFTPQMFAKMEY. A helical membrane pass occupies residues 457 to 477; the sequence is GVWFFFASLMVLSIVFVFFLL. Residues 478-542 are Extracellular-facing; the sequence is PETKGIPLES…EHLSEDLPKV (65 aa). Residues 519–542 are disordered; sequence IEESGYSKTGDQQVEHLSEDLPKV. The span at 531-542 shows a compositional bias: basic and acidic residues; it reads QVEHLSEDLPKV.

This sequence belongs to the major facilitator superfamily. Sugar transporter (TC 2.A.1.1) family. Interacts with creB. Post-translationally, ubiquitinated. Deubiquitinated by creB, probably to control its activity or amount.

The protein localises to the cell membrane. In terms of biological role, integral membrane transporter that imports quinic acid to be catabolized as a carbon source. In Neosartorya fischeri (strain ATCC 1020 / DSM 3700 / CBS 544.65 / FGSC A1164 / JCM 1740 / NRRL 181 / WB 181) (Aspergillus fischerianus), this protein is Probable quinate permease (qutD).